A 430-amino-acid polypeptide reads, in one-letter code: UDP-N-acetylglucosamine 1-carboxyvinyltransferase 1 (430 aa).

22 to 23 (KN) contacts phosphoenolpyruvate. UDP-N-acetyl-alpha-D-glucosamine is bound at residue Arg102. The Proton donor role is filled by Cys126. Cys126 is subject to 2-(S-cysteinyl)pyruvic acid O-phosphothioketal. UDP-N-acetyl-alpha-D-glucosamine contacts are provided by residues 131–135 (RPVDL), 172–175 (KVSV), Asp317, and Ile339.

Belongs to the EPSP synthase family. MurA subfamily.

Its subcellular location is the cytoplasm. The catalysed reaction is phosphoenolpyruvate + UDP-N-acetyl-alpha-D-glucosamine = UDP-N-acetyl-3-O-(1-carboxyvinyl)-alpha-D-glucosamine + phosphate. It participates in cell wall biogenesis; peptidoglycan biosynthesis. Functionally, cell wall formation. Adds enolpyruvyl to UDP-N-acetylglucosamine. This chain is UDP-N-acetylglucosamine 1-carboxyvinyltransferase 1, found in Mesorhizobium japonicum (strain LMG 29417 / CECT 9101 / MAFF 303099) (Mesorhizobium loti (strain MAFF 303099)).